A 418-amino-acid chain; its full sequence is Pentatricopeptide repeat-containing protein At2g18520, mitochondrial (418 aa).

A mitochondrion-targeting transit peptide spans 1–14; sequence MTSSRLYLRFLRRF. PPR repeat units lie at residues 101-135, 136-166, 173-207, 208-242, 243-276, 277-311, 312-342, and 343-373; these read TETF…GTPR, TVVS…FPQR, DKIS…GVEV, TIIA…GCDL, DNTV…GLKP, DTVS…NAAT, FRTL…HKIP, and DFKT…VKKK.

The protein belongs to the PPR family. P subfamily.

Its subcellular location is the mitochondrion. The protein is Pentatricopeptide repeat-containing protein At2g18520, mitochondrial of Arabidopsis thaliana (Mouse-ear cress).